We begin with the raw amino-acid sequence, 505 residues long: Trans-cinnamate 4-monooxygenase (505 aa).

Residues 3 to 23 (LLLVEKTLLALFAAIIASIFI) form a helical membrane-spanning segment. Residues 213-218 (RSRLAQ) and alanine 306 each bind (E)-cinnamate. Cysteine 447 lines the heme pocket.

Belongs to the cytochrome P450 family. It depends on heme as a cofactor.

The protein resides in the membrane. The enzyme catalyses (E)-cinnamate + reduced [NADPH--hemoprotein reductase] + O2 = (E)-4-coumarate + oxidized [NADPH--hemoprotein reductase] + H2O + H(+). It participates in phenylpropanoid metabolism; trans-4-coumarate biosynthesis; trans-4-coumarate from trans-cinnamate: step 1/1. In terms of biological role, catalyzes the first oxidative step of the phenylpropanoid pathway in higher plants by transforming trans-cinnamate into p-coumarate. The compounds formed by this pathway are essential components for lignification, pollination, and defense against ultraviolet light, predators and pathogens. The sequence is that of Trans-cinnamate 4-monooxygenase (CYP73A12) from Zinnia elegans (Garden zinnia).